We begin with the raw amino-acid sequence, 219 residues long: Zinc finger C2HC domain-containing protein 1B (219 aa).

C2HC/C3H-type zinc fingers lie at residues 14–43 (ELFP…LFNK) and 117–146 (DYIQ…QESR). Zn(2+)-binding residues include C18, C21, H33, C37, C121, C124, H136, and C140. The interval 190 to 219 (EASAAPTRPAVDPASGAKLRQGFAKSSKKD) is disordered.

Belongs to the ZC2HC1 family. The cofactor is Zn(2+).

In Bos taurus (Bovine), this protein is Zinc finger C2HC domain-containing protein 1B (ZC2HC1B).